The primary structure comprises 97 residues: MSSQQQKQPCTPPPQPQQQQVKQPCQPPPQEPCVPKTKEPCHPKVPEPCQPKVPEPCQPKVPEPCHPKVPEPCQPKVPEPCPSPVIPAPAQQKTKQK.

The disordered stretch occupies residues 1–42 (MSSQQQKQPCTPPPQPQQQQVKQPCQPPPQEPCVPKTKEPCH). Residue S2 is modified to N-acetylserine. Tandem repeats lie at residues 3–14 (SQQQKQPCTPPP), 18–29 (QQQVKQPCQPPP), 31–38 (EPCVPKTK), 39–46 (EPCHPKVP), 47–54 (EPCQPKVP), 55–62 (EPCQPKVP), 63–70 (EPCHPKVP), 71–78 (EPCQPKVP), and 79–85 (EPCPSPV). Residues 3 to 29 (SQQQKQPCTPPPQPQQQQVKQPCQPPP) form a 2 X 12 AA approximate repeats region. The interval 31–85 (EPCVPKTKEPCHPKVPEPCQPKVPEPCQPKVPEPCHPKVPEPCQPKVPEPCPSPV) is 7 X 8 AA approximate tandem repeats.

The protein belongs to the cornifin (SPRR) family. In terms of tissue distribution, not detected in normal lung tissue but seen in tumor tissues. Cells around the keratin pearls contain high levels.

It localises to the cytoplasm. Its function is as follows. Cross-linked envelope protein of keratinocytes. It is a keratinocyte protein that first appears in the cell cytosol, but ultimately becomes cross-linked to membrane proteins by transglutaminase. All that results in the formation of an insoluble envelope beneath the plasma membrane. In Sus scrofa (Pig), this protein is Cornifin (SPRP).